Consider the following 84-residue polypeptide: Large ribosomal subunit protein bL27 (84 aa).

This sequence belongs to the bacterial ribosomal protein bL27 family.

In Salinispora tropica (strain ATCC BAA-916 / DSM 44818 / JCM 13857 / NBRC 105044 / CNB-440), this protein is Large ribosomal subunit protein bL27.